The primary structure comprises 199 residues: Protein-methionine-sulfoxide reductase heme-binding subunit MsrQ (199 aa).

4 consecutive transmembrane segments (helical) span residues 8–28, 82–102, 116–136, and 153–173; these read IIWL…WLFW, LWCF…ELGI, PYLT…LTST, and VVYL…KVLS.

This sequence belongs to the MsrQ family. Heterodimer of a catalytic subunit (MsrP) and a heme-binding subunit (MsrQ). FMN is required as a cofactor. The cofactor is heme b.

The protein resides in the cell inner membrane. Its function is as follows. Part of the MsrPQ system that repairs oxidized periplasmic proteins containing methionine sulfoxide residues (Met-O), using respiratory chain electrons. Thus protects these proteins from oxidative-stress damage caused by reactive species of oxygen and chlorine generated by the host defense mechanisms. MsrPQ is essential for the maintenance of envelope integrity under bleach stress, rescuing a wide series of structurally unrelated periplasmic proteins from methionine oxidation, including the primary periplasmic chaperone SurA and the lipoprotein Pal. MsrQ provides electrons for reduction to the reductase catalytic subunit MsrP, using the quinone pool of the respiratory chain. The chain is Protein-methionine-sulfoxide reductase heme-binding subunit MsrQ from Salmonella arizonae (strain ATCC BAA-731 / CDC346-86 / RSK2980).